The chain runs to 134 residues: UPF0719 transmembrane protein YshE (134 aa).

A run of 4 helical transmembrane segments spans residues 10–30 (VEIA…LTVF), 48–68 (AVAM…QHSI), 78–98 (IGWG…FEFL), and 114–134 (AVGF…AAGI).

The protein belongs to the UPF0719 family.

It localises to the cell membrane. The sequence is that of UPF0719 transmembrane protein YshE (yshE) from Bacillus subtilis (strain 168).